The chain runs to 670 residues: Protein-glutamine gamma-glutamyltransferase 4 (670 aa).

2 N-linked (GlcNAc...) asparagine glycosylation sites follow: N151 and N219. C255 is a catalytic residue. N288 carries N-linked (GlcNAc...) asparagine glycosylation. Active-site residues include H314 and D337. Ca(2+)-binding residues include N377, D379, E429, and E434. 2 N-linked (GlcNAc...) asparagine glycosylation sites follow: N456 and N491.

Belongs to the transglutaminase superfamily. Transglutaminase family. In terms of assembly, homodimer. The cofactor is Ca(2+). In terms of tissue distribution, expressed in the coagulating gland and in the dorsal part of the prostate. Not expressed in the brain, heart, kidney, liver, lung, muscle, pancreas, spleen, stomach, testis and thymus.

The protein localises to the secreted. The catalysed reaction is L-glutaminyl-[protein] + L-lysyl-[protein] = [protein]-L-lysyl-N(6)-5-L-glutamyl-[protein] + NH4(+). Functionally, associated with the mammalian reproductive process. Plays an important role in the formation of the seminal coagulum through the cross-linking of specific proteins present in the seminal plasma. Transglutaminase is also required to stabilize the copulatory plug. This is Protein-glutamine gamma-glutamyltransferase 4 from Mus musculus (Mouse).